The chain runs to 394 residues: DNA replication and repair protein RecF (394 aa).

30-37 (GRNGFGKT) contacts ATP.

It belongs to the RecF family.

Its subcellular location is the cytoplasm. Its function is as follows. The RecF protein is involved in DNA metabolism; it is required for DNA replication and normal SOS inducibility. RecF binds preferentially to single-stranded, linear DNA. It also seems to bind ATP. This is DNA replication and repair protein RecF from Corynebacterium glutamicum (strain ATCC 13032 / DSM 20300 / JCM 1318 / BCRC 11384 / CCUG 27702 / LMG 3730 / NBRC 12168 / NCIMB 10025 / NRRL B-2784 / 534).